Reading from the N-terminus, the 391-residue chain is Toluene efflux pump periplasmic linker protein TtgG (391 aa).

An N-terminal signal peptide occupies residues 1–32; that stretch reads MRAERWSQTVRQIRSPRALRVIPLTALMLISG. C33 carries N-palmitoyl cysteine lipidation. C33 carries S-diacylglycerol cysteine lipidation. Residues 107–136 adopt a coiled-coil conformation; it reads RTYEAQLRRAEANRTSAQNLARRYETLLKT.

It belongs to the membrane fusion protein (MFP) (TC 8.A.1) family.

It localises to the cell inner membrane. Functionally, the periplasmic linker component of an organic solvent efflux pump. Involved in export of a number of organic solvents, including toluene and styrene. This is the most important solvent efflux pump in this strain, although it can export AMP and some antibiotics. This Pseudomonas putida (strain DOT-T1E) protein is Toluene efflux pump periplasmic linker protein TtgG (ttgG).